A 78-amino-acid polypeptide reads, in one-letter code: Acyl carrier protein (78 aa).

The region spanning 1 to 76 (MALFEDIQAV…DVVKYIEDNK (76 aa)) is the Carrier domain. Position 36 is an O-(pantetheine 4'-phosphoryl)serine (Ser36).

This sequence belongs to the acyl carrier protein (ACP) family. 4'-phosphopantetheine is transferred from CoA to a specific serine of apo-ACP by AcpS. This modification is essential for activity because fatty acids are bound in thioester linkage to the sulfhydryl of the prosthetic group.

It is found in the cytoplasm. It functions in the pathway lipid metabolism; fatty acid biosynthesis. Functionally, carrier of the growing fatty acid chain in fatty acid biosynthesis. This Helicobacter pylori (strain G27) protein is Acyl carrier protein.